Consider the following 397-residue polypeptide: L-asparaginase-like protein GM15681 (397 aa).

A signal peptide spans 1–22 (MLAQSCCLRLLILLLLFTSICS). 3 cysteine pairs are disulfide-bonded: C90-C95, C189-C205, and C344-C371.

It belongs to the Ntn-hydrolase family.

In Drosophila sechellia (Fruit fly), this protein is L-asparaginase-like protein GM15681.